Here is a 147-residue protein sequence, read N- to C-terminus: Hemoglobin subunit beta (147 aa).

An N-acetylvaline modification is found at V2. One can recognise a Globin domain in the interval 3–147 (HLTPDEKAAV…VANALAHKYH (145 aa)). Residue T13 is modified to Phosphothreonine. S45 is subject to Phosphoserine. N6-acetyllysine is present on K60. Residue H64 coordinates heme b. The residue at position 83 (K83) is an N6-acetyllysine. H93 is a binding site for heme b. The residue at position 94 (C94) is an S-nitrosocysteine. K145 is subject to N6-acetyllysine.

It belongs to the globin family. In terms of assembly, heterotetramer of two alpha chains and two beta chains. As to expression, red blood cells.

Involved in oxygen transport from the lung to the various peripheral tissues. The polypeptide is Hemoglobin subunit beta (HBB) (Colobus polykomos (Western black-and-white colobus monkey)).